The chain runs to 153 residues: MTPVQRRRLVWVLLALLASGLATALVAMALERNIAYLYTPSEVLRGDVDAQSRFRLGGMVVKGSFNRPVGSLEARFEVTDGDAQLAVTTSRILPDMFAEGTAVVASGRLQDGIFVADEVLAKHDEKYVPKEVADKMGDAHRKHDVPVTAPEVR.

Residues 1–8 (MTPVQRRR) are Cytoplasmic-facing. A helical; Signal-anchor for type II membrane protein membrane pass occupies residues 9–29 (LVWVLLALLASGLATALVAMA). The Periplasmic segment spans residues 30 to 153 (LERNIAYLYT…DVPVTAPEVR (124 aa)). Heme is bound by residues His-123 and Tyr-127.

Belongs to the CcmE/CycJ family.

The protein resides in the cell inner membrane. Functionally, heme chaperone required for the biogenesis of c-type cytochromes. Transiently binds heme delivered by CcmC and transfers the heme to apo-cytochromes in a process facilitated by CcmF and CcmH. The sequence is that of Cytochrome c-type biogenesis protein CcmE from Stenotrophomonas maltophilia (strain R551-3).